The sequence spans 383 residues: Chitinase-3-like protein 1 (383 aa).

The first 21 residues, 1–21, serve as a signal peptide directing secretion; that stretch reads MGLRASGTGFVVLVLLQSCAA. In terms of domain architecture, GH18 spans 22–383; it reads YKLICYYTSW…SAVKDVLAEV (362 aa). Cysteines 26 and 51 form a disulfide. Residue Asn60 is glycosylated (N-linked (GlcNAc...) asparagine). Chitin contacts are provided by residues 70–71, 97–100, Tyr141, 204–207, and Arg263; these read EW, GGWN, and LTYD. The cysteines at positions 300 and 364 are disulfide-linked. Residues 324 to 338 are important for AKT1 activation and IL8 production; sequence QWVAYDDQESVKNKA. Position 352 (Trp352) interacts with chitin. N-linked (GlcNAc...) asparagine glycosylation occurs at Asn367.

The protein belongs to the glycosyl hydrolase 18 family. As to quaternary structure, monomer.

Its subcellular location is the secreted. The protein resides in the extracellular space. It localises to the cytoplasm. The protein localises to the perinuclear region. It is found in the endoplasmic reticulum. In terms of biological role, carbohydrate-binding lectin with a preference for chitin. Has no chitinase activity. May play a role in tissue remodeling and in the capacity of cells to respond to and cope with changes in their environment. Plays a role in T-helper cell type 2 (Th2) inflammatory response and IL-13-induced inflammation, regulating allergen sensitization, inflammatory cell apoptosis, dendritic cell accumulation and M2 macrophage differentiation. Facilitates invasion of pathogenic enteric bacteria into colonic mucosa and lymphoid organs. Mediates activation of AKT1 signaling pathway and subsequent IL8 production in colonic epithelial cells. Regulates antibacterial responses in lung by contributing to macrophage bacterial killing, controlling bacterial dissemination and augmenting host tolerance. Also regulates hyperoxia-induced injury, inflammation and epithelial apoptosis in lung. In Capra hircus (Goat), this protein is Chitinase-3-like protein 1 (CHI3L1).